Consider the following 204-residue polypeptide: FMN-dependent NADH:quinone oxidoreductase 1 (204 aa).

Residues Ser-10 and 15–17 (SLS) each bind FMN.

The protein belongs to the azoreductase type 1 family. Homodimer. The cofactor is FMN.

It carries out the reaction 2 a quinone + NADH + H(+) = 2 a 1,4-benzosemiquinone + NAD(+). The catalysed reaction is N,N-dimethyl-1,4-phenylenediamine + anthranilate + 2 NAD(+) = 2-(4-dimethylaminophenyl)diazenylbenzoate + 2 NADH + 2 H(+). Its function is as follows. Quinone reductase that provides resistance to thiol-specific stress caused by electrophilic quinones. Functionally, also exhibits azoreductase activity. Catalyzes the reductive cleavage of the azo bond in aromatic azo compounds to the corresponding amines. The sequence is that of FMN-dependent NADH:quinone oxidoreductase 1 from Rhizobium etli (strain ATCC 51251 / DSM 11541 / JCM 21823 / NBRC 15573 / CFN 42).